Reading from the N-terminus, the 147-residue chain is Hemoglobin subunit beta (147 aa).

N-acetylserine is present on S2. Positions 3–147 (FLSAEEKNLV…VASALAHRYH (145 aa)) constitute a Globin domain. S45 carries the phosphoserine modification. N6-acetyllysine is present on K60. H64 is a heme b binding site. K83 bears the N6-acetyllysine mark. Residue H93 participates in heme b binding. Position 94 is an S-nitrosocysteine (C94).

Belongs to the globin family. As to quaternary structure, heterotetramer of two alpha chains and two beta chains. Red blood cells.

Its function is as follows. Involved in oxygen transport from the lung to the various peripheral tissues. This is Hemoglobin subunit beta (HBB) from Panthera pardus orientalis (Amur leopard).